A 1230-amino-acid polypeptide reads, in one-letter code: Cullin-associated NEDD8-dissociated protein 1 (1230 aa).

Residue Ala2 is modified to N-acetylalanine. HEAT repeat units follow at residues 2-39, 44-81, 83-119, 131-165, 171-208, 210-247, 248-282, 289-366, 370-407, 424-467, 471-510, and 515-552; these read ASAS…KDSI, DSER…KVKE, QVET…ELPP, CKKI…LSRQ, NFHP…SCGN, VFVD…QAGH, RIGE…FESF, EVYP…TRHE, EFYK…QTRP, PLTM…VLPG, QHIP…NHSP, and PHVQ…VIRP. Residue Lys55 is modified to N6-acetyllysine. Positions 315–344 are disordered; it reads DEDEDENAMDADGGDDDDQGSDDEYSDDDD. The residue at position 335 (Ser335) is a Phosphoserine. A Phosphoserine modification is found at Ser558. HEAT repeat units lie at residues 563–602, 606–643, 646–683, 688–725, 729–768, 770–808, 809–845, 852–889, 890–927, 928–960, 961–998, 1002–1039, 1043–1097, 1099–1133, and 1140–1189; these read PYIK…NLGD, SDLP…LKID, PVLG…NYSD, AMID…VYPS, KISG…TGTN, LGYM…ALTR, ACPK…LGEV, SGQL…GNLP, EYLP…GLKP, YVEN…KLTL, IDPE…DHPQ, PLLK…NKPS, DLLD…DSCL, RLDI…LSTL, and QRLD…IPEA. Lys971 carries the post-translational modification N6-acetyllysine.

The protein belongs to the CAND family. As to quaternary structure, interacts with TBP. Part of a complex that contains CUL1 and RBX1. Interacts with unneddylated cullins: interacts with CUL1, CUL2, CUL3, CUL4A, CUL4B and CUL5. Does not bind neddylated CUL1. Interaction with cullins is abolished in presence of COMMD1, which antagonizes with CAND1 for interacting with cullins. Interacts with ERCC6. Interacts with DCUN1D1, DCUN1D2, DCUN1D3, DCUN1D4 and DCUN1D5; these interactions are bridged by cullins and strongly inhibits the neddylation of cullins.

The protein localises to the cytoplasm. It localises to the nucleus. In terms of biological role, key assembly factor of SCF (SKP1-CUL1-F-box protein) E3 ubiquitin ligase complexes that promotes the exchange of the substrate-recognition F-box subunit in SCF complexes, thereby playing a key role in the cellular repertoire of SCF complexes. Acts as a F-box protein exchange factor. The exchange activity of CAND1 is coupled with cycles of neddylation conjugation: in the deneddylated state, cullin-binding CAND1 binds CUL1-RBX1, increasing dissociation of the SCF complex and promoting exchange of the F-box protein. Probably plays a similar role in other cullin-RING E3 ubiquitin ligase complexes. The sequence is that of Cullin-associated NEDD8-dissociated protein 1 (CAND1) from Bos taurus (Bovine).